The primary structure comprises 252 residues: 2-succinyl-6-hydroxy-2,4-cyclohexadiene-1-carboxylate synthase (252 aa).

The protein belongs to the AB hydrolase superfamily. MenH family. As to quaternary structure, monomer.

It catalyses the reaction 5-enolpyruvoyl-6-hydroxy-2-succinyl-cyclohex-3-ene-1-carboxylate = (1R,6R)-6-hydroxy-2-succinyl-cyclohexa-2,4-diene-1-carboxylate + pyruvate. Its pathway is quinol/quinone metabolism; 1,4-dihydroxy-2-naphthoate biosynthesis; 1,4-dihydroxy-2-naphthoate from chorismate: step 3/7. The protein operates within quinol/quinone metabolism; menaquinone biosynthesis. In terms of biological role, catalyzes a proton abstraction reaction that results in 2,5-elimination of pyruvate from 2-succinyl-5-enolpyruvyl-6-hydroxy-3-cyclohexene-1-carboxylate (SEPHCHC) and the formation of 2-succinyl-6-hydroxy-2,4-cyclohexadiene-1-carboxylate (SHCHC). This Salmonella paratyphi A (strain ATCC 9150 / SARB42) protein is 2-succinyl-6-hydroxy-2,4-cyclohexadiene-1-carboxylate synthase.